The sequence spans 449 residues: Probable phosphoglucosamine mutase (449 aa).

The active-site Phosphoserine intermediate is serine 101. Positions 101, 239, 241, and 243 each coordinate Mg(2+). Residue serine 101 is modified to Phosphoserine.

Belongs to the phosphohexose mutase family. Mg(2+) serves as cofactor. Post-translationally, activated by phosphorylation.

It carries out the reaction alpha-D-glucosamine 1-phosphate = D-glucosamine 6-phosphate. In terms of biological role, catalyzes the conversion of glucosamine-6-phosphate to glucosamine-1-phosphate. This chain is Probable phosphoglucosamine mutase, found in Methanothermobacter thermautotrophicus (strain ATCC 29096 / DSM 1053 / JCM 10044 / NBRC 100330 / Delta H) (Methanobacterium thermoautotrophicum).